We begin with the raw amino-acid sequence, 273 residues long: Shikimate dehydrogenase (NADP(+)) (273 aa).

Shikimate is bound by residues S14 to S16 and T61. Residue K65 is the Proton acceptor of the active site. E77 serves as a coordination point for NADP(+). Residues N86 and D102 each contribute to the shikimate site. Residues G126–A130, N150–K155, and M214 contribute to the NADP(+) site. Y216 lines the shikimate pocket. NADP(+) is bound at residue G238.

It belongs to the shikimate dehydrogenase family. Homodimer.

The catalysed reaction is shikimate + NADP(+) = 3-dehydroshikimate + NADPH + H(+). Its pathway is metabolic intermediate biosynthesis; chorismate biosynthesis; chorismate from D-erythrose 4-phosphate and phosphoenolpyruvate: step 4/7. In terms of biological role, involved in the biosynthesis of the chorismate, which leads to the biosynthesis of aromatic amino acids. Catalyzes the reversible NADPH linked reduction of 3-dehydroshikimate (DHSA) to yield shikimate (SA). The polypeptide is Shikimate dehydrogenase (NADP(+)) (Photobacterium profundum (strain SS9)).